Consider the following 261-residue polypeptide: Cytochrome c oxidase subunit 3 (261 aa).

Over 1 to 15 the chain is Mitochondrial matrix; that stretch reads MTHQTHAYHMVNPSP. A helical membrane pass occupies residues 16 to 34; it reads WPLTGALSALLMTSGLTMW. Topologically, residues 35–40 are mitochondrial intermembrane; sequence FHFNST. A helical transmembrane segment spans residues 41-66; sequence ILLMLGLTTNMLTMYQWWRDIIREST. Residues 67–72 are Mitochondrial matrix-facing; sequence FQGHHT. A helical membrane pass occupies residues 73-105; it reads PVVQKGLRYGMILFIISEVLFFTGFFWAFYHSS. Topologically, residues 106-128 are mitochondrial intermembrane; the sequence is LAPTPELGGCWPPTGIHPLNPLE. A helical transmembrane segment spans residues 129 to 152; that stretch reads VPLLNTSVLLASGVSITWAHHSLM. Over 153–155 the chain is Mitochondrial matrix; it reads EGH. A helical membrane pass occupies residues 156–183; sequence RNHMLQALFITIALGVYFTLLQASEYYE. At 184–190 the chain is on the mitochondrial intermembrane side; sequence APFTISD. The chain crosses the membrane as a helical span at residues 191–223; the sequence is GVYGSTFFVATGFHGLHVIIGSTFLIVCFFRQL. The Mitochondrial matrix segment spans residues 224 to 232; it reads KFHFTSSHH. A helical membrane pass occupies residues 233–256; sequence FGFEAAAWYWHFVDVVWLFLYVSI. The Mitochondrial intermembrane segment spans residues 257-261; the sequence is YWWGS.

The protein belongs to the cytochrome c oxidase subunit 3 family. Component of the cytochrome c oxidase (complex IV, CIV), a multisubunit enzyme composed of 14 subunits. The complex is composed of a catalytic core of 3 subunits MT-CO1, MT-CO2 and MT-CO3, encoded in the mitochondrial DNA, and 11 supernumerary subunits COX4I, COX5A, COX5B, COX6A, COX6B, COX6C, COX7A, COX7B, COX7C, COX8 and NDUFA4, which are encoded in the nuclear genome. The complex exists as a monomer or a dimer and forms supercomplexes (SCs) in the inner mitochondrial membrane with NADH-ubiquinone oxidoreductase (complex I, CI) and ubiquinol-cytochrome c oxidoreductase (cytochrome b-c1 complex, complex III, CIII), resulting in different assemblies (supercomplex SCI(1)III(2)IV(1) and megacomplex MCI(2)III(2)IV(2)).

It localises to the mitochondrion inner membrane. The enzyme catalyses 4 Fe(II)-[cytochrome c] + O2 + 8 H(+)(in) = 4 Fe(III)-[cytochrome c] + 2 H2O + 4 H(+)(out). Its function is as follows. Component of the cytochrome c oxidase, the last enzyme in the mitochondrial electron transport chain which drives oxidative phosphorylation. The respiratory chain contains 3 multisubunit complexes succinate dehydrogenase (complex II, CII), ubiquinol-cytochrome c oxidoreductase (cytochrome b-c1 complex, complex III, CIII) and cytochrome c oxidase (complex IV, CIV), that cooperate to transfer electrons derived from NADH and succinate to molecular oxygen, creating an electrochemical gradient over the inner membrane that drives transmembrane transport and the ATP synthase. Cytochrome c oxidase is the component of the respiratory chain that catalyzes the reduction of oxygen to water. Electrons originating from reduced cytochrome c in the intermembrane space (IMS) are transferred via the dinuclear copper A center (CU(A)) of subunit 2 and heme A of subunit 1 to the active site in subunit 1, a binuclear center (BNC) formed by heme A3 and copper B (CU(B)). The BNC reduces molecular oxygen to 2 water molecules using 4 electrons from cytochrome c in the IMS and 4 protons from the mitochondrial matrix. This Tragelaphus strepsiceros (Greater kudu) protein is Cytochrome c oxidase subunit 3 (MT-CO3).